The following is an 874-amino-acid chain: Probable inorganic carbon transporter subunit DabA (874 aa).

Cys398, Asp400, His580, and Cys595 together coordinate Zn(2+).

This sequence belongs to the inorganic carbon transporter (TC 9.A.2) DabA family. In terms of assembly, forms a complex with DabB. Zn(2+) is required as a cofactor.

Its subcellular location is the cell membrane. Part of an energy-coupled inorganic carbon pump. This is Probable inorganic carbon transporter subunit DabA from Bacillus cereus (strain 03BB102).